The sequence spans 378 residues: Wnt inhibitory factor 1 (378 aa).

The first 28 residues, Met1–Tyr28, serve as a signal peptide directing secretion. The region spanning Met36–Cys175 is the WIF domain. Residue Asn86 is glycosylated (N-linked (GlcNAc...) asparagine). 6 disulfide bridges follow: Cys138–Cys175, Cys180–Cys190, Cys184–Cys196, Cys212–Cys222, Cys216–Cys228, and Cys230–Cys239. EGF-like domains are found at residues Gln176–Val205, Glu208–Glu240, Asn243–Glu272, Glu272–Ser304, and Lys305–Asn336. An N-linked (GlcNAc...) asparagine glycan is attached at Asn243. Intrachain disulfides connect Cys244/Cys254, Cys248/Cys260, Cys262/Cys271, Cys276/Cys286, Cys280/Cys292, Cys294/Cys303, Cys308/Cys318, Cys312/Cys324, and Cys326/Cys335. The disordered stretch occupies residues Val343–Val378. Residues Glu367 to Val378 show a composition bias toward polar residues.

As to expression, highly expressed in unsegmented paraxial mesoderm.

The protein localises to the secreted. Binds to WNT proteins and inhibits their activities. May be involved in mesoderm segmentation. This Danio rerio (Zebrafish) protein is Wnt inhibitory factor 1 (wif1).